A 550-amino-acid chain; its full sequence is Hydroxylamine reductase (550 aa).

[2Fe-2S] cluster contacts are provided by Cys-3, Cys-6, Cys-18, and Cys-25. Hybrid [4Fe-2O-2S] cluster-binding residues include His-249, Glu-273, Cys-317, Cys-405, Cys-433, Cys-458, Glu-492, and Lys-494. At Cys-405 the chain carries Cysteine persulfide.

It belongs to the HCP family. [2Fe-2S] cluster is required as a cofactor. It depends on hybrid [4Fe-2O-2S] cluster as a cofactor.

The protein localises to the cytoplasm. The catalysed reaction is A + NH4(+) + H2O = hydroxylamine + AH2 + H(+). Catalyzes the reduction of hydroxylamine to form NH(3) and H(2)O. The sequence is that of Hydroxylamine reductase from Escherichia coli O6:H1 (strain CFT073 / ATCC 700928 / UPEC).